We begin with the raw amino-acid sequence, 510 residues long: NAD(P)H-quinone oxidoreductase subunit 2, chloroplastic (510 aa).

A run of 12 helical transmembrane segments spans residues 24 to 44 (LLLFNGSFIFPECILIFGLIL), 59 to 79 (WFYFISSTSLVMSITALLFRW), 99 to 119 (IFQFLILLCSTLCIPLSVEYI), 124 to 144 (MAITEFLLFVLTATLGGMFLC), 149 to 169 (LITIFVAPECFSLCSYLLSGY), 183 to 203 (YLLMGGASSSILVHGFSWLYG), 229 to 249 (ISIALISITVGIGFKLSPAPF), 295 to 315 (WHLLLEILAILSMILGNLIAI), 323 to 343 (MLAYSSIGQIGYVIIGIIVGD), 347 to 367 (GYASMITYMLFYISMNLGTFA), 395 to 415 (ALSSALCLLSLGGLPPLAGFF), and 418 to 438 (LHLFWCGWQAGLYFLVSIGLL).

This sequence belongs to the complex I subunit 2 family. In terms of assembly, NDH is composed of at least 16 different subunits, 5 of which are encoded in the nucleus.

The protein resides in the plastid. It is found in the chloroplast thylakoid membrane. It catalyses the reaction a plastoquinone + NADH + (n+1) H(+)(in) = a plastoquinol + NAD(+) + n H(+)(out). It carries out the reaction a plastoquinone + NADPH + (n+1) H(+)(in) = a plastoquinol + NADP(+) + n H(+)(out). In terms of biological role, NDH shuttles electrons from NAD(P)H:plastoquinone, via FMN and iron-sulfur (Fe-S) centers, to quinones in the photosynthetic chain and possibly in a chloroplast respiratory chain. The immediate electron acceptor for the enzyme in this species is believed to be plastoquinone. Couples the redox reaction to proton translocation, and thus conserves the redox energy in a proton gradient. This Allium textile (Textile onion) protein is NAD(P)H-quinone oxidoreductase subunit 2, chloroplastic.